Reading from the N-terminus, the 367-residue chain is Flagellar P-ring protein (367 aa).

Residues 1-22 (MRRMLVIRWILAIHLIATQVFA) form the signal peptide.

The protein belongs to the FlgI family. As to quaternary structure, the basal body constitutes a major portion of the flagellar organelle and consists of four rings (L,P,S, and M) mounted on a central rod.

The protein resides in the periplasm. Its subcellular location is the bacterial flagellum basal body. In terms of biological role, assembles around the rod to form the L-ring and probably protects the motor/basal body from shearing forces during rotation. This is Flagellar P-ring protein from Legionella pneumophila subsp. pneumophila (strain Philadelphia 1 / ATCC 33152 / DSM 7513).